A 120-amino-acid chain; its full sequence is UPF0102 protein PTH_1707 (120 aa).

This sequence belongs to the UPF0102 family.

This Pelotomaculum thermopropionicum (strain DSM 13744 / JCM 10971 / SI) protein is UPF0102 protein PTH_1707.